The chain runs to 212 residues: Ferric nitrobindin-like protein (212 aa).

The segment covering 1 to 11 (MTSSDQPERGS) has biased composition (basic and acidic residues). Residues 1–36 (MTSSDQPERGSGDAAVQAAAERAEQTRGRNVPQFDD) are disordered. The GXWXGXG motif lies at 64 to 70 (GVWRGDG).

It belongs to the nitrobindin family.

The polypeptide is Ferric nitrobindin-like protein (Saccharopolyspora erythraea (strain ATCC 11635 / DSM 40517 / JCM 4748 / NBRC 13426 / NCIMB 8594 / NRRL 2338)).